Reading from the N-terminus, the 566-residue chain is Arginine--tRNA ligase (566 aa).

A 'HIGH' region motif is present at residues 121–131 (ANPNGPFHIGH).

This sequence belongs to the class-I aminoacyl-tRNA synthetase family.

The protein localises to the cytoplasm. It catalyses the reaction tRNA(Arg) + L-arginine + ATP = L-arginyl-tRNA(Arg) + AMP + diphosphate. This chain is Arginine--tRNA ligase, found in Methanococcus maripaludis (strain C5 / ATCC BAA-1333).